The following is a 202-amino-acid chain: Transcriptional regulator GfcR 2 (202 aa).

This sequence belongs to the purine/pyrimidine phosphoribosyltransferase family. GfcR subfamily.

This Methanosarcina barkeri (strain Fusaro / DSM 804) protein is Transcriptional regulator GfcR 2.